We begin with the raw amino-acid sequence, 219 residues long: Large ribosomal subunit protein uL3 (219 aa).

2 disordered regions span residues 62-81 and 136-156; these read DSRS…KKAG and QARG…SVGM.

The protein belongs to the universal ribosomal protein uL3 family. In terms of assembly, part of the 50S ribosomal subunit. Forms a cluster with proteins L14 and L19.

Its function is as follows. One of the primary rRNA binding proteins, it binds directly near the 3'-end of the 23S rRNA, where it nucleates assembly of the 50S subunit. The chain is Large ribosomal subunit protein uL3 from Staphylococcus saprophyticus subsp. saprophyticus (strain ATCC 15305 / DSM 20229 / NCIMB 8711 / NCTC 7292 / S-41).